Here is a 216-residue protein sequence, read N- to C-terminus: Ras-like protein rasW (216 aa).

A GTP-binding site is contributed by 16–23; it reads GDGGVGKT. The Effector region motif lies at 38–46; that stretch reads YDPTIEDSY. Residues 63–67 and 122–125 each bind GTP; these read DTAGQ and NKID. The segment at 171 to 193 is disordered; the sequence is KRKEDPQSHKPSKDSDSKKPLVN. Residues 172–189 show a composition bias toward basic and acidic residues; the sequence is RKEDPQSHKPSKDSDSKK. Cysteine 213 carries the post-translational modification Cysteine methyl ester. Cysteine 213 carries the S-geranylgeranyl cysteine lipid modification. The propeptide at 214 to 216 is removed in mature form; that stretch reads KMM.

It belongs to the small GTPase superfamily. Ras family.

Its subcellular location is the cell membrane. It carries out the reaction GTP + H2O = GDP + phosphate + H(+). Ras proteins bind GDP/GTP and possess intrinsic GTPase activity. The polypeptide is Ras-like protein rasW (rasW) (Dictyostelium discoideum (Social amoeba)).